The primary structure comprises 2097 residues: 1-phosphatidylinositol 3-phosphate 5-kinase (2097 aa).

The interval 1-44 (MATDDKSSPTLDSANDLPRSPASPSHLTHFKPLTPDQDEPPFKS) is disordered. Ala-2 is modified (N-acetylalanine). Phosphoserine; by autocatalysis occurs at positions 23 and 48. The disordered stretch occupies residues 56–122 (NKERGEGGQG…AEPACGGHDP (67 aa)). Positions 66–81 (EQQSPSSSWASPQIPS) are enriched in low complexity. Residue Ser-88 is modified to Phosphoserine. The segment at 158 to 218 (DSQCKECYDC…ACTYCRKIAL (61 aa)) adopts an FYVE-type zinc-finger fold. Positions 164, 167, 180, 183, 188, 191, 210, and 213 each coordinate Zn(2+). 3 positions are modified to phosphoserine: Ser-299, Ser-307, and Ser-312. A Phosphoserine; by PKB/AKT1 or PKB/AKT2 modification is found at Ser-318. Ser-329 is subject to Phosphoserine. Residues 365-440 (HTSGMEFQDH…DEYALYRPLQ (76 aa)) enclose the DEP domain. Polar residues predominate over residues 442-459 (TEFSETPSPDSDSVNSVE). Residues 442–469 (TEFSETPSPDSDSVNSVEGHSEPSWFKD) are disordered. Over residues 460–469 (GHSEPSWFKD) the composition is skewed to basic and acidic residues. A Phosphoserine modification is found at Ser-475. Residues 484-505 (GDDNLANSASPSKRTSVSSFQS) are disordered. A compositionally biased stretch (polar residues) spans 488 to 505 (LANSASPSKRTSVSSFQS). Positions 616–868 (MMALLQQLLQ…MICVAYHSQL (253 aa)) are chaperonin-like domain. Disordered regions lie at residues 895-928 (GRGE…EDST), 989-1022 (AVGN…QDDT), 1171-1194 (HSKD…EERG), and 1511-1555 (FQQE…HNGE). Polar residues predominate over residues 902-912 (SQEQVSGSSLP). Residues 1175-1184 (ASCTSGGKSG) show a composition bias toward polar residues. A compositionally biased stretch (basic and acidic residues) spans 1185–1194 (NKTESDEERG). Phosphoserine occurs at positions 1543 and 1548. Ser-1668 carries the post-translational modification Phosphoserine; by autocatalysis. The interval 1697 to 1742 (EGLPANSALDNRPKSSSPIRLPEISGGQTNRTVEAEPQPTKKASGM) is disordered. Ser-1753 carries the post-translational modification Phosphoserine. One can recognise a PIPK domain in the interval 1757–2083 (SSQKRETLRG…RFCEAMDKYF (327 aa)). Positions 1781–1800 (GLESQGLEPQDEVDGGDTQK) are disordered. The segment at 1841–2097 (EEEFIRSLSH…DHWTGLDLNC (257 aa)) is catalytic. 2 positions are modified to phosphoserine; by autocatalysis: Ser-1968 and Ser-2052.

In terms of assembly, component of the PI(3,5)P2 regulatory complex/PAS complex, at least composed of PIKFYVE, FIG4 and VAC14. VAC14 nucleates the assembly of the complex and serves as a scaffold by pentamerizing into a star-shaped structure, which can bind a single copy each of PIKFYVE and FIG4 and coordinates their activities. Interacts (via chaperonin-like domain) with RABEPK; the interaction recruits RABEPK to the endosomal membrane. Interacts with SPAG9. Interacts with EGFR. The cofactor is Mn(2+). Phosphorylated in response to insulin at Ser-318 in a protein kinase B (PKB)-dependent manner. Autophosphorylates which down-regulates lipid product formation. In terms of processing, autophosphorylates which inhibits its own phosphatidylinositol 3-phosphate 5-kinase activity, stimulates FIG4 lipid phosphatase activity and down-regulates lipid product formation. Dephosphorylated by FIG4 in the PI(3,5)P2 regulatory complex, at Ser-48, Ser-1668 and Ser-2052. Phosphorylated in response to insulin at Ser-318 in a protein kinase B (PKB)-dependent manner. Ubiquitous.

The protein resides in the endosome membrane. It is found in the early endosome membrane. The protein localises to the cytoplasmic vesicle. Its subcellular location is the phagosome membrane. It localises to the late endosome membrane. It carries out the reaction a 1,2-diacyl-sn-glycero-3-phospho-(1D-myo-inositol-3-phosphate) + ATP = a 1,2-diacyl-sn-glycero-3-phospho-(1D-myo-inositol-3,5-bisphosphate) + ADP + H(+). It catalyses the reaction a 1,2-diacyl-sn-glycero-3-phospho-(1D-myo-inositol) + ATP = a 1,2-diacyl-sn-glycero-3-phospho-(1D-myo-inositol-5-phosphate) + ADP + H(+). The catalysed reaction is L-seryl-[protein] + ATP = O-phospho-L-seryl-[protein] + ADP + H(+). With respect to regulation, inhibited by apilimod and YM201636. Functionally, dual specificity kinase implicated in myriad essential cellular processes such as maintenance of endomembrane homeostasis, and endocytic-vacuolar pathway, lysosomal trafficking, nuclear transport, stress- or hormone-induced signaling and cell cycle progression. The PI(3,5)P2 regulatory complex regulates both the synthesis and turnover of phosphatidylinositol 3,5-bisphosphate (PtdIns(3,5)P2). Sole enzyme to catalyze the phosphorylation of phosphatidylinositol 3-phosphate on the fifth hydroxyl of the myo-inositol ring, to form (PtdIns(3,5)P2). Also catalyzes the phosphorylation of phosphatidylinositol on the fifth hydroxyl of the myo-inositol ring, to form phosphatidylinositol 5-phosphate (PtdIns(5)P). Has serine-protein kinase activity and is able to autophosphorylate and transphosphorylate. Autophosphorylation inhibits its own phosphatidylinositol 3-phosphate 5-kinase activity, stimulates FIG4 lipid phosphatase activity and down-regulates lipid product formation. Involved in key endosome operations such as fission and fusion in the course of endosomal cargo transport. Required for the maturation of early into late endosomes, phagosomes and lysosomes. Regulates vacuole maturation and nutrient recovery following engulfment of macromolecules, initiates the redistribution of accumulated lysosomal contents back into the endosome network. Critical regulator of the morphology, degradative activity, and protein turnover of the endolysosomal system in macrophages and platelets. In neutrophils, critical to perform chemotaxis, generate ROS, and undertake phagosome fusion with lysosomes. Plays a key role in the processing and presentation of antigens by major histocompatibility complex class II (MHC class II) mediated by CTSS. Regulates melanosome biogenesis by controlling the delivery of proteins from the endosomal compartment to the melanosome. Essential for systemic glucose homeostasis, mediates insulin-induced signals for endosome/actin remodeling in the course of GLUT4 translocation/glucose uptake activation. Supports microtubule-based endosome-to-trans-Golgi network cargo transport, trhough association with SPAG9 and RABEPK. Mediates EGFR trafficking to the nucleus. The polypeptide is 1-phosphatidylinositol 3-phosphate 5-kinase (Mus musculus (Mouse)).